Reading from the N-terminus, the 274-residue chain is Formamidopyrimidine-DNA glycosylase (274 aa).

Pro-2 acts as the Schiff-base intermediate with DNA in catalysis. Glu-3 acts as the Proton donor in catalysis. Residue Lys-58 is the Proton donor; for beta-elimination activity of the active site. 2 residues coordinate DNA: His-91 and Arg-110. The FPG-type zinc finger occupies Gln-238–Arg-272. The Proton donor; for delta-elimination activity role is filled by Arg-262.

It belongs to the FPG family. As to quaternary structure, monomer. Requires Zn(2+) as cofactor.

It catalyses the reaction Hydrolysis of DNA containing ring-opened 7-methylguanine residues, releasing 2,6-diamino-4-hydroxy-5-(N-methyl)formamidopyrimidine.. The catalysed reaction is 2'-deoxyribonucleotide-(2'-deoxyribose 5'-phosphate)-2'-deoxyribonucleotide-DNA = a 3'-end 2'-deoxyribonucleotide-(2,3-dehydro-2,3-deoxyribose 5'-phosphate)-DNA + a 5'-end 5'-phospho-2'-deoxyribonucleoside-DNA + H(+). In terms of biological role, involved in base excision repair of DNA damaged by oxidation or by mutagenic agents. Acts as a DNA glycosylase that recognizes and removes damaged bases. Has a preference for oxidized purines, such as 7,8-dihydro-8-oxoguanine (8-oxoG). Has AP (apurinic/apyrimidinic) lyase activity and introduces nicks in the DNA strand. Cleaves the DNA backbone by beta-delta elimination to generate a single-strand break at the site of the removed base with both 3'- and 5'-phosphates. The polypeptide is Formamidopyrimidine-DNA glycosylase (Streptococcus pneumoniae serotype 4 (strain ATCC BAA-334 / TIGR4)).